The sequence spans 670 residues: Lebercilin-like protein (670 aa).

Residues 30–51 are disordered; sequence KRSPGTGDFSRNSNASNKSVDY. The span at 38-51 shows a compositional bias: polar residues; the sequence is FSRNSNASNKSVDY. 2 coiled-coil regions span residues 148–259 and 305–336; these read LHKI…EREE and AAQT…IKNI. Positions 374-393 are disordered; sequence HQGTQKSDVPPLTTKGKKAT. Residues 420–440 adopt a coiled-coil conformation; sequence EDSKRKYEDLSGEEKHLEVQI. Disordered stretches follow at residues 495 to 516, 557 to 580, and 609 to 670; these read RSMQ…YTKG, KHLS…SFGK, and LKTD…KIII. 2 stretches are compositionally biased toward basic and acidic residues: residues 560-572 and 621-632; these read SNRE…HSDS and GSEEPLQSKESH. Over residues 651-662 the composition is skewed to polar residues; it reads TVVNSIKPSSPT.

It belongs to the LCA5 family.

This is Lebercilin-like protein (LCA5L) from Homo sapiens (Human).